A 199-amino-acid chain; its full sequence is MTTLTAQQIACVYAWLAQLFSRELDDEQLTQIASAQMAEWFSLMKSEPPLTAAVNELENRIAALTVRDDARLELAADFCGLFLMTDKQAALPYASAYKQDEQEIKRLLVEAGMVTSGNFNEPADHLAIYLELLSHLHFSLGEGSVPARRIDSLRQKTLTALWEWLPEFAARCRQYDSFGFYAALSQLLLVLVECDHQNR.

The protein belongs to the TorD/DmsD family. TorD subfamily.

It localises to the cytoplasm. Involved in the biogenesis of TorA. Acts on TorA before the insertion of the molybdenum cofactor and, as a result, probably favors a conformation of the apoenzyme that is competent for acquiring the cofactor. In Escherichia coli O7:K1 (strain IAI39 / ExPEC), this protein is Chaperone protein TorD.